The chain runs to 199 residues: Potassium-transporting ATPase KdpC subunit (199 aa).

The helical transmembrane segment at 7-27 (PALVMTAALCLITGIIYPGLI) threads the bilayer.

It belongs to the KdpC family. In terms of assembly, the system is composed of three essential subunits: KdpA, KdpB and KdpC.

It localises to the cell inner membrane. Part of the high-affinity ATP-driven potassium transport (or Kdp) system, which catalyzes the hydrolysis of ATP coupled with the electrogenic transport of potassium into the cytoplasm. This subunit acts as a catalytic chaperone that increases the ATP-binding affinity of the ATP-hydrolyzing subunit KdpB by the formation of a transient KdpB/KdpC/ATP ternary complex. This is Potassium-transporting ATPase KdpC subunit from Gemmatimonas aurantiaca (strain DSM 14586 / JCM 11422 / NBRC 100505 / T-27).